The following is a 430-amino-acid chain: Tyrosine--tRNA ligase (430 aa).

Position 32 (Y32) interacts with L-tyrosine. Residues 37–46 (PTADSLHIGH) carry the 'HIGH' region motif. Residues Y172 and Q176 each coordinate L-tyrosine. A 'KMSKS' region motif is present at residues 232–236 (KFGKT). Position 235 (K235) interacts with ATP. The 68-residue stretch at 362–429 (VKAVDLFVDN…GKKNYFLLIA (68 aa)) folds into the S4 RNA-binding domain.

This sequence belongs to the class-I aminoacyl-tRNA synthetase family. TyrS type 1 subfamily. Homodimer.

It localises to the cytoplasm. The enzyme catalyses tRNA(Tyr) + L-tyrosine + ATP = L-tyrosyl-tRNA(Tyr) + AMP + diphosphate + H(+). Catalyzes the attachment of tyrosine to tRNA(Tyr) in a two-step reaction: tyrosine is first activated by ATP to form Tyr-AMP and then transferred to the acceptor end of tRNA(Tyr). The polypeptide is Tyrosine--tRNA ligase (Bacteroides thetaiotaomicron (strain ATCC 29148 / DSM 2079 / JCM 5827 / CCUG 10774 / NCTC 10582 / VPI-5482 / E50)).